Here is a 116-residue protein sequence, read N- to C-terminus: Ribonuclease P protein component (116 aa).

Belongs to the RnpA family. Consists of a catalytic RNA component (M1 or rnpB) and a protein subunit.

It carries out the reaction Endonucleolytic cleavage of RNA, removing 5'-extranucleotides from tRNA precursor.. In terms of biological role, RNaseP catalyzes the removal of the 5'-leader sequence from pre-tRNA to produce the mature 5'-terminus. It can also cleave other RNA substrates such as 4.5S RNA. The protein component plays an auxiliary but essential role in vivo by binding to the 5'-leader sequence and broadening the substrate specificity of the ribozyme. This Caldanaerobacter subterraneus subsp. tengcongensis (strain DSM 15242 / JCM 11007 / NBRC 100824 / MB4) (Thermoanaerobacter tengcongensis) protein is Ribonuclease P protein component.